The sequence spans 318 residues: Olfactory receptor 13C5 (318 aa).

At 1–25 the chain is on the extracellular side; it reads MEWENHTILVEFFLKGLSGHPRLEL. Asn-5 is a glycosylation site (N-linked (GlcNAc...) asparagine). The helical transmembrane segment at 26 to 46 threads the bilayer; it reads LFFVLIFIMYVVILLGNGTLI. Residues 47-54 lie on the Cytoplasmic side of the membrane; that stretch reads LISILDPH. The helical transmembrane segment at 55–75 threads the bilayer; it reads LHTPMYFFLGNLSFLDICYTT. Topologically, residues 76–99 are extracellular; the sequence is TSIPSTLVSFLSERKTISLSGCAV. Cys-97 and Cys-189 are oxidised to a cystine. Residues 100-120 traverse the membrane as a helical segment; that stretch reads QMFLSLAMGTTECVLLGVMAF. At 121-139 the chain is on the cytoplasmic side; that stretch reads DRYVAICNPLRYPIIMSKD. The helical transmembrane segment at 140–160 threads the bilayer; sequence AYVPMAAGSWIIGAVNSAVQT. Residues 161 to 197 are Extracellular-facing; that stretch reads VFVVQLPFCRNNIINHFTCEILAVMKLACADISGNEF. The chain crosses the membrane as a helical span at residues 198-217; it reads ILLVTTTLFLLTPLLLIIVS. At 218 to 237 the chain is on the cytoplasmic side; the sequence is YTLIILSIFKISSSEGRSKP. The chain crosses the membrane as a helical span at residues 238–258; it reads SSTCSARLTVVITFCGTIFLM. Topologically, residues 259-277 are extracellular; the sequence is YMKPKSQETLNSDDLDATD. A helical transmembrane segment spans residues 278–298; the sequence is KLIFIFYRVMTPMMNPLIYSL. Over 299-318 the chain is Cytoplasmic; the sequence is RNKDVKEAVKHLLRRKNFNK.

Belongs to the G-protein coupled receptor 1 family.

It localises to the cell membrane. Its function is as follows. Odorant receptor. The protein is Olfactory receptor 13C5 (OR13C5) of Homo sapiens (Human).